We begin with the raw amino-acid sequence, 81 residues long: Penaeidin-3c (81 aa).

Positions 1–19 (MRLVVCLVFLASFALVCQG) are cleaved as a signal peptide. Residue glutamine 20 is modified to Pyrrolidone carboxylic acid. Intrachain disulfides connect cysteine 50-cysteine 65, cysteine 54-cysteine 72, and cysteine 66-cysteine 73. The residue at position 80 (serine 80) is a Serine amide.

The protein belongs to the penaeidin family. Higher expression in hemocytes and to a lesser extent in heart, testis, gills, intestine, lymphoid organ and hepatopancreas. Traces in eyes and subcuticular epithelium. Not present in the brain.

The protein resides in the cytoplasmic granule. Its function is as follows. Antibacterial activity against M.luteus and E.coli bacteria. Antifungal activity against N.crassa and F.oxysporum. Presents chitin-binding activity. This Penaeus vannamei (Whiteleg shrimp) protein is Penaeidin-3c.